A 465-amino-acid chain; its full sequence is Hepatocyte nuclear factor 6 (465 aa).

2 disordered regions span residues 15-84 and 119-141; these read GVSH…GPLH and SDKF…HQRL. Positions 123–140 are enriched in basic residues; it reads PHHHHHHHHHHHPHHHQR. The segment at residues 283–369 is a DNA-binding region (CUT); that stretch reads GSNSGQMEEI…QRMSALRLAA (87 aa). A DNA-binding region (homeobox) is located at residues 385–444; it reads PKKPRLVFTDVQRRTLHAIFKENKRPSKELQITISQQLGLELSTVSNFFMNARRRSLDKW. A disordered region spans residues 443 to 465; the sequence is KWQDEGGSNSGSSSSSSSTCTKA. Over residues 448 to 465 the composition is skewed to low complexity; that stretch reads GGSNSGSSSSSSSTCTKA.

Belongs to the CUT homeobox family. In terms of assembly, binds DNA as a monomer.

The protein localises to the nucleus. In terms of biological role, transcriptional activator. Binds the consensus sequence 5'-DHWATTGAYTWWD-3' on a variety of gene promoters such as those of HNF3B and TTR. Important for liver genes transcription. Stimulates the expression of Onecut3 in the developing endoderm. This Mus musculus (Mouse) protein is Hepatocyte nuclear factor 6 (Onecut1).